The following is a 398-amino-acid chain: O-methyltransferase penC (398 aa).

D263 is an S-adenosyl-L-methionine binding site. The active-site Proton acceptor is the H305.

The protein belongs to the class I-like SAM-binding methyltransferase superfamily. Cation-independent O-methyltransferase family.

It participates in secondary metabolite biosynthesis. The protein operates within alkaloid biosynthesis. Its pathway is mycotoxin biosynthesis. Functionally, O-methyltransferase; part of the gene cluster that mediates the biosynthesis of penigequinolones, potent insecticidal alkaloids that contain a highly modified 10-carbon prenyl group. The first stage is catalyzed by the nonribosomal peptide synthetase penN that condenses anthranilic acid and O-methyl-L-tyrosine to produce 4'-methoxycyclopeptin. 4'-methoxycyclopeptin is then converted to 4'-methoxydehydrocyclopeptin by the ketoglutarate-dependent dioxygenase penM through dehydrogenation to form a double bond between C-alpha and C-beta of the O-methyltyrosine side chain. PenM also converts its first product methoxydehydrocyclopeptin to 4'-methoxycyclopenin. The following conversion of 4'methoxycyclopenin into 4'-methoxyviridicatin is catalyzed by the cyclopenase penL. 4'-methoxyviridicatin is the precursor of quinolone natural products, and is further converted to quinolinone B. The prenyltransferase penI then catalyzes the canonical Friedel-Crafts alkylation of quinolinone B with dimethylallyl cation to yield dimethylallyl quinolone, which is subjected to FAD-dependent dehydrogenation by the FAD-linked oxidoreductase penH to yield conjugated aryl diene. The delta(3') double bond then serves as the site of the second alkylation with DMAPP catalyzed by the prenyltransferase penG to yield a carbenium ion intermediate, which can be attacked by H(2)O to yield a styrenyl quinolone containing a C3'-hydroxyprenyl chain, or undergo cyclization to yield yaequinolones J1 and J2. The conversion of the styrenyl quinolone into the tetrahydrofuran-containing yaequinolone C is performed by the FAD-dependent monooxygenase penE and involves epoxidation of the terminal C7'-C8' olefin, followed by epoxide ring opening initiated by the C3' hydroxyl group. The predicted cysteine hydrolase penJ acts as an epoxide hydrolase that enhances the rate of the 5-exo-tet cyclization step, increasing the yield of yaequinolone C. PenF catalyzes the cationic rearrangement of the epoxide formed by penE (before ring opening to produce yaequinolone C) into yaequinolone D. Finally, the short-chain dehydrogenase/reductase (SDR)-like reductase penD, catalyzes both the dehydration of yaequinolone D and the reduction of the resulting oxonium to yield penigequinolone. The chain is O-methyltransferase penC from Penicillium thymicola.